The following is a 141-amino-acid chain: Hemoglobin subunit alpha-A (141 aa).

The region spanning 1 to 141 (VLSAADKTNV…VSTVLTAKYR (141 aa)) is the Globin domain. Histidine 58 lines the O2 pocket. A heme b-binding site is contributed by histidine 87.

It belongs to the globin family. As to quaternary structure, heterotetramer of two alpha chains and two beta chains. In terms of tissue distribution, red blood cells.

Involved in oxygen transport from the lung to the various peripheral tissues. The polypeptide is Hemoglobin subunit alpha-A (HBAA) (Eudynamys scolopaceus (Western koel)).